Consider the following 1204-residue polypeptide: Bromodomain and PHD finger-containing protein 3 (1204 aa).

Disordered regions lie at residues 1 to 27 (MRKPRRKSRQNAEGRRSPSPYSLKCSP) and 76 to 127 (SNKE…TGSQ). Positions 89–99 (KSKKPSSKGKR) are enriched in basic residues. The PHD-type 1 zinc-finger motif lies at 212–262 (DAFCCVCLDDECHNSNVILFCDICNLAVHQECYGVPYIPEGQWLCRCCLQS). The C2HC pre-PHD-type zinc finger occupies 266–299 (PVDCVLCPNKGGAFKQTSDGHWAHVVCAIWIPEV). The PHD-type 2 zinc finger occupies 323 to 387 (LTCYICKQKG…RKTAYCEAHS (65 aa)). A disordered region spans residues 393–464 (ARRKGDSPRS…KKEPEEAGRE (72 aa)). Phosphoserine is present on residues Ser-399 and Ser-402. The segment covering 417–429 (GEEEQEEAEEEGQ) has biased composition (acidic residues). The segment covering 442 to 454 (VSKKGKMSLKQKI) has biased composition (basic residues). N6-acetyllysine occurs at positions 445, 447, and 670. Residues 588–692 (LELMPFTVLL…DLGGAILRHA (105 aa)) form the Bromo domain. Residues Ser-712 and Ser-739 each carry the phosphoserine modification. The tract at residues 778–879 (RQKLAQPPPP…FLKSRKVEDE (102 aa)) is disordered. The span at 816 to 826 (QQEEPEEEGDR) shows a compositional bias: acidic residues. Ser-899, Ser-961, and Ser-964 each carry phosphoserine. The tract at residues 903 to 1015 (IDRLSLTNPD…ESGSDSECSL (113 aa)) is disordered. Residues 979-990 (SCSDSEGERSPQ) show a composition bias toward basic and acidic residues. Positions 1075–1158 (PLELVWAKCR…RDKVLPLGVE (84 aa)) constitute a PWWP domain.

As to quaternary structure, component of some HBO1 complexes composed of KAT7/HBO1, MEAF6, ING4 or ING5, and BRPF3. Component of the MOZ/MORF complex composed at least of ING5, KAT6A, KAT6B, MEAF6 and one of BRPF1, BRD1/BRPF2 and BRPF3. Interacts with KAT7/HBO1; the interaction is direct. In terms of tissue distribution, highly expressed in the adult testis and brain.

The protein resides in the nucleus. In terms of biological role, scaffold subunit of various histone acetyltransferase (HAT) complexes, such as the MOZ/MORF and HBO1 complexes, which have a histone H3 acetyltransferase activity. Plays a role in DNA replication initiation by directing KAT7/HBO1 specificity towards histone H3 'Lys-14' acetylation (H3K14ac), thereby facilitating the activation of replication origins. Component of the MOZ/MORF complex which has a histone H3 acetyltransferase activity. This Mus musculus (Mouse) protein is Bromodomain and PHD finger-containing protein 3.